The sequence spans 549 residues: Probable protein kinase UbiB (549 aa).

Residues 123–501 (DFNETPLASA…QQQAHKSNYL (379 aa)) enclose the Protein kinase domain. Residues 129–137 (LASASISQV) and lysine 152 contribute to the ATP site. The active-site Proton acceptor is aspartate 287. The next 2 helical transmembrane spans lie at 496 to 516 (HKSN…TLLI) and 520 to 540 (ATLW…FVGW).

The protein belongs to the ABC1 family. UbiB subfamily.

Its subcellular location is the cell inner membrane. It functions in the pathway cofactor biosynthesis; ubiquinone biosynthesis [regulation]. Functionally, is probably a protein kinase regulator of UbiI activity which is involved in aerobic coenzyme Q (ubiquinone) biosynthesis. In Shewanella baltica (strain OS185), this protein is Probable protein kinase UbiB.